Consider the following 305-residue polypeptide: Tetraspanin-12 (305 aa).

Topologically, residues 1–12 are cytoplasmic; sequence MAREDSVKCLRC. Residues Cys-9 and Cys-12 are each lipidated (S-palmitoyl cysteine). The helical transmembrane segment at 13 to 33 threads the bilayer; the sequence is LLYALNLLFWLMSISVLAVSA. The Extracellular segment spans residues 34–59; sequence WMRDYLNNVLTLTAETRVEEAVILTY. A helical transmembrane segment spans residues 60–80; sequence FPVVHPVMIAVCCFLIIVGML. Residues 81–89 are Cytoplasmic-facing; the sequence is GYCGTVKRN. Cys-83 carries S-palmitoyl cysteine lipidation. Residues 90 to 110 traverse the membrane as a helical segment; it reads LLLLAWYFGSLLVIFCVELAC. At 111–224 the chain is on the extracellular side; it reads GVWTYEQEIM…RGTKQLQVLR (114 aa). A helical transmembrane segment spans residues 225–245; it reads FLGISIGVTQILAMILTITLL. At 246 to 305 the chain is on the cytoplasmic side; the sequence is WALYYDRREPGTDQMMALKNDTTQHLPCHSVELLKPSLSRIFEHTSMANSFNTHFEMEEL.

It belongs to the tetraspanin (TM4SF) family. As to quaternary structure, component of a complex, at least composed of TSPAN12, FZD4 and norrin (NDP). Interacts (when palmitoylated) with ADAM10. Interacts with MMP14/MT1-MMP. Palmitoylated; required for interaction with ADAM10. The precise position of palmitoylated residues is unclear and occurs either on Cys-9, Cys-12 and/or Cys-83.

The protein localises to the cell membrane. Regulator of cell surface receptor signal transduction. Plays a central role in retinal vascularization by regulating norrin (NDP) signal transduction. Acts in concert with norrin (NDP) to promote FZD4 multimerization and subsequent activation of FZD4, leading to promote accumulation of beta-catenin (CTNNB1) and stimulate LEF/TCF-mediated transcriptional programs. Suprisingly, it only activates the norrin (NDP)-dependent activation of FZD4, while it does not activate the Wnt-dependent activation of FZD4, suggesting the existence of a Wnt-independent signaling that also promote accumulation the beta-catenin (CTNNB1). Acts as a regulator of membrane proteinases such as ADAM10 and MMP14/MT1-MMP. Activates ADAM10-dependent cleavage activity of amyloid precursor protein (APP). Activates MMP14/MT1-MMP-dependent cleavage activity. The protein is Tetraspanin-12 (TSPAN12) of Bos taurus (Bovine).